Consider the following 249-residue polypeptide: DNA repair protein RecO (249 aa).

Belongs to the RecO family.

Involved in DNA repair and RecF pathway recombination. This chain is DNA repair protein RecO, found in Polaromonas naphthalenivorans (strain CJ2).